A 609-amino-acid chain; its full sequence is Carotenoid cleavage dioxygenase 7, chloroplastic (609 aa).

A chloroplast-targeting transit peptide spans 1-34 (MATQAIAPMHAAVVHRHHVLPPRRCVRRRGVFVR). His263, His316, His394, and His603 together coordinate Fe cation.

The protein belongs to the carotenoid oxygenase family. Fe(2+) is required as a cofactor. Expressed in vascular bundles of roots, leaves, stems and panicles.

It is found in the plastid. It localises to the chloroplast. The catalysed reaction is 9-cis-beta-carotene + O2 = 9-cis-10'-apo-beta-carotenal + beta-ionone. Functionally, involved in strigolactones biosynthesis by cleaving asymmetrically a variety of linear and cyclic carotenoids at the 9-10 double bond. Produces one C(13) beta-ionone and the C(27) 10'-apo-beta-carotenal. Strigolactones are hormones that inhibit tillering and shoot branching through the MAX-dependent pathway, contribute to the regulation of shoot architectural response to phosphate-limiting conditions and function as rhizosphere signal that stimulates hyphal branching of arbuscular mycorrhizal fungi and trigger seed germination of root parasitic weeds. Can rescue the phenotype in the Arabidopsis max3 mutant. The protein is Carotenoid cleavage dioxygenase 7, chloroplastic (CCD7) of Oryza sativa subsp. japonica (Rice).